The sequence spans 349 residues: Core protein VP7 (349 aa).

An N-linked (GlcNAc...) asparagine; by host glycan is attached at asparagine 287.

The protein belongs to the orbivirus VP7 family. In terms of assembly, homotrimer that assemble in a complex of 260 capsomers on an inner scaffold composed of VP3.

Its subcellular location is the virion. In terms of biological role, the VP7 protein is one of the five proteins (with VP1, VP3, VP4, and VP6) which form the inner capsid of the virus. This chain is Core protein VP7 (Segment-7), found in Antilocapra americana (Pronghorn).